Consider the following 109-residue polypeptide: Polyprenyl transferase subC (109 aa).

2 helical membrane passes run 39-59 (LFCV…NDWI) and 84-104 (QAFV…HVML).

The protein belongs to the UbiA prenyltransferase family. The cofactor is Mg(2+).

The protein resides in the membrane. It participates in secondary metabolite biosynthesis; terpenoid biosynthesis. Polyprenyl transferase; part of the gene cluster that mediates the biosynthesis of the immunosuppressants subglutinols, meroterpenoids consisting of an alpha-pyrone (4-hydroxy-5,6-dimethyl-2-pyrone) moiety attached to a decalin core fused to a five-membered cyclic ether carrying a prenylside chain. The first step of the pathway is the synthesis of the alpha-pyrone moiety by the polyketide synthase subA via condensation of one acetyl-CoA starter unit with 3 malonyl-CoA units and 2 methylations. The alpha-pyrone is then combined with geranylgeranyl pyrophosphate (GGPP) formed by the GGPP synthase subD through the action of the prenyltransferase subC to yield a linear alpha-pyrone diterpenoid. Subsequent steps in the subglutinol biosynthetic pathway involve the decalin core formation, which is thought to be initiated by the epoxidation of the C10-C11 olefin by the FAD-dependent oxidoreductase subE. The following cyclization cascade would be catalyzed by the terpene cyclase subB. Lastly, the FAD-dependent dehydrogenase subF probably catalyzes the five-membered cyclic ether formation to complete the formation of subglutinol A. Subsequent redox reactions appear to give rise to subglutinol C and D, however, it remains unclear which enzymes are responsible for these transformations. SubD may have secondary function in the conversion of the identified subglutinols to subglutinol analog 45, which seems to be the major product of the cluster. This is Polyprenyl transferase subC from Metarhizium robertsii (strain ARSEF 23 / ATCC MYA-3075) (Metarhizium anisopliae (strain ARSEF 23)).